The chain runs to 670 residues: Solute carrier organic anion transporter family member 1A1 (670 aa).

At 1–20 the chain is on the cytoplasmic side; sequence MEETEKKVATQEGRFFSKMK. The helical transmembrane segment at 21 to 40 threads the bilayer; sequence VFLMSLTCAYLAKSLSGVYM. Topologically, residues 41–59 are extracellular; that stretch reads NSMLTQIERQFGIPTSVVG. The chain crosses the membrane as a helical span at residues 60-80; it reads FITGSFEIGNLLLIVFVSYFG. Over 81–86 the chain is Cytoplasmic; that stretch reads RKLHRP. A helical transmembrane segment spans residues 87–111; sequence IIIGVGCVVMGLGCFLMASPHFLMG. Residues 112 to 155 are Extracellular-facing; that stretch reads RYKYETTISPTSNLSSNSFLCIENRTQTLKPTQDPTECVKEIKS. Asparagine 124 and asparagine 135 each carry an N-linked (GlcNAc...) asparagine glycan. Residues 156–184 form a helical membrane-spanning segment; it reads LMWIYVLIGNTMRGIGETPIMPLGISYIE. Residues 185–203 are Cytoplasmic-facing; that stretch reads DFAKSENSPLYIGILEMGK. The chain crosses the membrane as a helical span at residues 204–224; that stretch reads IVGPIIGLLLGSFFARVYVDI. Topologically, residues 225-242 are extracellular; that stretch reads GSVNTDDLTITPTDTRWV. The helical transmembrane segment at 243–267 threads the bilayer; sequence GAWWIGFLVCAGVNILTSIPFFFFP. The Cytoplasmic segment spans residues 268-311; that stretch reads KTLPKKELQDNVDVTKYEKVEKHRERAKKENLGITKDFLPFMKS. A helical membrane pass occupies residues 312-333; that stretch reads LCCNPIYMLFSLTSVLQINGFA. Topologically, residues 334-353 are extracellular; it reads STFTFLPKYLEQQYGKSTSE. The helical transmembrane segment at 354–377 threads the bilayer; sequence AVFLIGVYSLPPVCLGYLISGFIM. Residues 378-381 are Cytoplasmic-facing; it reads KKFK. Residues 382–405 form a helical membrane-spanning segment; the sequence is ITVKKAAYIAFGLSLSEYFIFLCN. The Extracellular portion of the chain corresponds to 406-513; sequence YLLTCDNFPV…PECDNKLQYF (108 aa). The Kazal-like domain maps to 433–488; that stretch reads KNVLADCNTRCSCLTDTWDPVCGDNGLAYMSACLAGCEKSVGTGTNMVFQNCSCIG. 3 cysteine pairs are disulfide-bonded: cysteine 439–cysteine 469, cysteine 445–cysteine 465, and cysteine 454–cysteine 486. Asparagine 483 and asparagine 492 each carry an N-linked (GlcNAc...) asparagine glycan. A helical transmembrane segment spans residues 514 to 536; sequence LIKSVFSSFIFSLAAIPGYMVLL. Residues 537–545 are Cytoplasmic-facing; the sequence is RCVKSEEKS. A helical membrane pass occupies residues 546-571; it reads IGVGLHAFFIRLLAGIPAPVYFGALI. The Extracellular segment spans residues 572-605; the sequence is DRTCLHWGTLKCGQPGACRMYDINRFRHIYLGLP. A helical transmembrane segment spans residues 606-623; sequence AAVRGSSFLPAVFILILM. Topologically, residues 624–670 are cytoplasmic; it reads RKFHFPGDIHSPDTELAEMKLTEKESECTDVCRSPKVENDGELKTKL. Position 634 is a phosphoserine (serine 634).

It belongs to the organo anion transporter (TC 2.A.60) family. Binds to PDZK1. Interaction with PDZK1 is required for expression on hepatocyte surface. As to expression, highly expressed in liver, and at lower levels in kidney. Not detected in other tissues.

It localises to the basolateral cell membrane. It carries out the reaction estrone 3-sulfate(out) + hydrogencarbonate(in) = estrone 3-sulfate(in) + hydrogencarbonate(out). The enzyme catalyses taurocholate(out) + hydrogencarbonate(in) = taurocholate(in) + hydrogencarbonate(out). It catalyses the reaction L-thyroxine(out) = L-thyroxine(in). The catalysed reaction is prostaglandin E2(out) = prostaglandin E2(in). It carries out the reaction 17beta-estradiol 17-O-(beta-D-glucuronate)(out) = 17beta-estradiol 17-O-(beta-D-glucuronate)(in). The enzyme catalyses dehydroepiandrosterone 3-sulfate(out) = dehydroepiandrosterone 3-sulfate(in). In terms of biological role, mediates the Na(+)-independent transport of organic anions such as steroid sulfate conjugates (dehydroepiandrosterone sulfate (DHEAS), 17-beta-glucuronosyl estradiol, estrone-3-sulfate), conjugated (taurocholate) and unconjugated (cholate) bile acids, prostaglandin E2 (PGE2) and L-thyroxine T4. Also capable of transporting sulfobromophthalein (BSP), ouabain and gadoxetate. Hydrogencarbonate/HCO3(-) acts as the probable counteranion that exchanges for organic anions. Shows a pH-sensitive substrate specificity which may be ascribed to the protonation state of the binding site and leads to a stimulation of substrate transport in an acidic microenvironment. This chain is Solute carrier organic anion transporter family member 1A1, found in Mus musculus (Mouse).